The primary structure comprises 449 residues: tRNA(Ile)-lysidine synthase (449 aa).

35 to 40 is an ATP binding site; the sequence is SGGIDS.

It belongs to the tRNA(Ile)-lysidine synthase family.

It localises to the cytoplasm. The catalysed reaction is cytidine(34) in tRNA(Ile2) + L-lysine + ATP = lysidine(34) in tRNA(Ile2) + AMP + diphosphate + H(+). Functionally, ligates lysine onto the cytidine present at position 34 of the AUA codon-specific tRNA(Ile) that contains the anticodon CAU, in an ATP-dependent manner. Cytidine is converted to lysidine, thus changing the amino acid specificity of the tRNA from methionine to isoleucine. The sequence is that of tRNA(Ile)-lysidine synthase from Coxiella burnetii (strain RSA 493 / Nine Mile phase I).